We begin with the raw amino-acid sequence, 237 residues long: Ribonuclease PH (237 aa).

Residues Arg-86 and 124–126 (GTR) each bind phosphate.

The protein belongs to the RNase PH family. In terms of assembly, homohexameric ring arranged as a trimer of dimers.

It catalyses the reaction tRNA(n+1) + phosphate = tRNA(n) + a ribonucleoside 5'-diphosphate. Phosphorolytic 3'-5' exoribonuclease that plays an important role in tRNA 3'-end maturation. Removes nucleotide residues following the 3'-CCA terminus of tRNAs; can also add nucleotides to the ends of RNA molecules by using nucleoside diphosphates as substrates, but this may not be physiologically important. Probably plays a role in initiation of 16S rRNA degradation (leading to ribosome degradation) during starvation. The chain is Ribonuclease PH from Methylobacterium radiotolerans (strain ATCC 27329 / DSM 1819 / JCM 2831 / NBRC 15690 / NCIMB 10815 / 0-1).